A 324-amino-acid polypeptide reads, in one-letter code: Probable cell division protein WhiA (324 aa).

A DNA-binding region (H-T-H motif) is located at residues 276 to 310; the sequence is TLKELGEMMQGGKVSKSGINHRLRKIDEFADKLRN.

The protein belongs to the WhiA family.

In terms of biological role, involved in cell division and chromosome segregation. The polypeptide is Probable cell division protein WhiA (Shouchella clausii (strain KSM-K16) (Alkalihalobacillus clausii)).